A 447-amino-acid polypeptide reads, in one-letter code: NADP-specific glutamate dehydrogenase (447 aa).

The substrate site is built by lysine 92, glutamine 113, and lysine 116. Lysine 128 (proton donor) is an active-site residue. Position 167 (glycine 167) interacts with substrate. 2 residues coordinate NADP(+): threonine 211 and asparagine 242. A substrate-binding site is contributed by serine 380.

This sequence belongs to the Glu/Leu/Phe/Val dehydrogenases family. As to quaternary structure, homohexamer.

It carries out the reaction L-glutamate + NADP(+) + H2O = 2-oxoglutarate + NH4(+) + NADPH + H(+). Its function is as follows. Catalyzes the reversible oxidative deamination of glutamate to alpha-ketoglutarate and ammonia. This is NADP-specific glutamate dehydrogenase (gdhA) from Salmonella typhi.